Reading from the N-terminus, the 1842-residue chain is Fatty acid synthase alpha subunit pigJ (1842 aa).

The disordered stretch occupies residues 120–184 (GAPVEEEGSK…TPAGGSTTPD (65 aa)). The segment covering 140-175 (SGSSRTATTAKATVTTPSSSSPETAPPAASTPSQGT) has biased composition (low complexity). Positions 184–262 (DIPLSAKHVV…DALQGNFPGK (79 aa)) constitute a Carrier domain. Residue Ser222 is modified to O-(pantetheine 4'-phosphoryl)serine. The beta-ketoacyl reductase stretch occupies residues 611–807 (GKTVLVTGAG…CGAAIGWVRG (197 aa)). In terms of domain architecture, Ketosynthase family 3 (KS3) spans 1058-1585 (KEFLQEIVVE…QKGGIAVVVA (528 aa)). Active-site for beta-ketoacyl synthase activity residues include Cys1244, His1470, and His1511. Positions 1649–1672 (KARVGGHPENNNNNNNNSSSKRNT) are disordered. Over residues 1658–1668 (NNNNNNNNSSS) the composition is skewed to low complexity. Residues Asp1725, Val1726, and Glu1727 each coordinate Mg(2+). Acetyl-CoA-binding positions include 1725–1727 (DVE), Ser1761, 1770–1780 (EAVFKSLQTPS), and 1823–1825 (ITH). 2 residues coordinate Mg(2+): Thr1824 and His1825.

This sequence belongs to the thiolase-like superfamily. Fungal fatty acid synthetase subunit alpha family. [Alpha(6)beta(6)] hexamers of two multifunctional subunits (alpha and beta).

The catalysed reaction is acetyl-CoA + n malonyl-CoA + 2n NADPH + 4n H(+) = a long-chain-acyl-CoA + n CoA + n CO2 + 2n NADP(+).. It carries out the reaction a fatty acyl-[ACP] + malonyl-[ACP] + H(+) = a 3-oxoacyl-[ACP] + holo-[ACP] + CO2. The enzyme catalyses a (3R)-hydroxyacyl-[ACP] + NADP(+) = a 3-oxoacyl-[ACP] + NADPH + H(+). It participates in secondary metabolite biosynthesis. In terms of biological role, fatty acid synthase alpha subunit; part of the gene cluster that mediates the biosynthesis of azaphilone pigments (MonAzPs), a complex mixture of compounds with a common azaphilone skeleton very widely used as food colorants. PigJ and pigK form the two subunits of a dedicated fungal fatty acid synthase (FAS) that produces the side chain fatty acyl moiety of MonAzPs, a beta-keto fatty acid. The chain length control of the pigJ-pigK FAS is somewhat flexible as MonAzPs features either a beta-ketooctanoic or a beta-ketodecanoic acid moiety. The beta-ketoacyl-ACP probably serves as the substrate for the acetyltransferase pigD that directly transfers the fatty acyl chain to the C-4 alcohol of the pyran ring. The first step of the pathway is performed by the nrPKS pigA that forms the hexaketide precursor from successive condensations of five malonyl-CoA units, with a simple acetyl-CoA starter unit. The role of esterase pigG is not clear, but it may play at most a supplementary role in the formation of the benzaldehyde produced by the pigA nrPKS. This very reactive benzaldehyde is intercepted by the pigC ketoreductase that to provide the first stable enzyme-free MonAzPs intermediate, 6-(4-hydroxy-2-oxopentyl)-3-methyl-2,4-dioxocyclohexane carbaldehyde, also known as M7PKS-1. The FAD-dependent monooxygenase pigN hydroxylates M7PKS-1 at C-4, which triggers the formation of the pyran ring. PigJ, pigK and pigD are involved in the acetylation of the pyran ring. PigJ and pigK form the two subunits of a dedicated fungal FAS that produces the side chain fatty acyl moiety of MonAzPs and pigD transfers the fatty acyl chain to the C-4 alcohol. PigM and pigO are involved in the elimination of the omega-1 alcohol. PigM acts as an O-acetyltransferase that synthesizes the putative O-11 acetyl intermediate whereas pigO eliminates acetic acid to yield an intermediate with a C10(11) double bond. The dehydration of the C-11 alcohol followed by the reduction of the C6(7) double bond by the NAD(P)H-dependent oxidoreductase pigE increases the electrophilicity of the C-5 ketone of the resulting acyl benzopyran. This in turn sets up the C-5 ketone for an intramolecular Knoevenagel aldol condensation with the C-20 enol of the side chain. This condensation affords the characteristic linear tricyclic carbon skeletons of the yellow pigments that serve as the common precursors for the classical yellow pigments monascin and ankaflavin, orange pigments rubopunctatin and monascorubrin, and red pigments ribropunctamine and monascorubramine. The FAD-dependent oxidoreductase pigF is especially invoved in the biosynthesis of orange and red pigments via desaturation of C6(7). This Monascus ruber (Mold) protein is Fatty acid synthase alpha subunit pigJ.